We begin with the raw amino-acid sequence, 126 residues long: 5-carboxymethyl-2-hydroxymuconate Delta-isomerase (126 aa).

Pro2 serves as the catalytic Proton acceptor; via imino nitrogen.

In terms of assembly, homotrimer.

The catalysed reaction is (2E,4Z)-5-hydroxypenta-2,4-diene-1,2,5-tricarboxylate = (3E,5R)-5-carboxy-2-oxohept-3-enedioate. The protein operates within aromatic compound metabolism; 4-hydroxyphenylacetate degradation; pyruvate and succinate semialdehyde from 4-hydroxyphenylacetate: step 4/7. Transforms 5-carboxymethyl-2-hydroxy-muconic acid (CHM) into 5-oxo-pent-3-ene-1,2,5-tricarboxylic acid (OPET). This chain is 5-carboxymethyl-2-hydroxymuconate Delta-isomerase (hpcD), found in Escherichia coli.